Here is an 853-residue protein sequence, read N- to C-terminus: Guanine nucleotide exchange protein smcr8a (853 aa).

Residues 47 to 219 (TSYAKFSKDF…KETELQKMNN (173 aa)) enclose the uDENN FLCN/SMCR8-type domain. Disordered regions lie at residues 272-298 (PVMD…SRKS) and 418-454 (LKPG…SFSS). Over residues 280-298 (DTNPSDSAENTVETESRKS) the composition is skewed to polar residues. Residues 316–753 (RLKTLEELCD…LISHLADHRT (438 aa)) enclose the cDENN FLCN/SMCR8-type domain. Residues 421–432 (GVESGEGPPESS) show a composition bias toward low complexity. A compositionally biased stretch (polar residues) spans 433–454 (TSDITQETSEAADTETKGSFSS). Residues 762–826 (FLHIQGMLTQ…IIQYLSELIK (65 aa)) form the dDENN FLCN/SMCR8-type domain.

This sequence belongs to the SMCR8 family. In terms of assembly, component of the C9orf72-SMCR8 complex. The C9orf72-SMCR8 complex associates with the ATG1/ULK1 kinase complex.

The protein resides in the cytoplasm. It is found in the nucleus. In terms of biological role, component of the C9orf72-SMCR8 complex, a complex that has guanine nucleotide exchange factor (GEF) activity and regulates autophagy. In the complex, C9orf72 and SMCR8 probably constitute the catalytic subunits that promote the exchange of GDP to GTP, converting inactive GDP-bound RAB8A and RAB39B into their active GTP-bound form, thereby promoting autophagosome maturation. The C9orf72-SMCR8 complex also acts as a negative regulator of autophagy initiation by interacting with the ATG1/ULK1 kinase complex and inhibiting its protein kinase activity. This chain is Guanine nucleotide exchange protein smcr8a (smcr8a), found in Danio rerio (Zebrafish).